The chain runs to 207 residues: Ribosomal RNA small subunit methyltransferase G (207 aa).

Residues Gly-73, Leu-78, 124 to 125, and Arg-139 each bind S-adenosyl-L-methionine; that span reads VE.

The protein belongs to the methyltransferase superfamily. RNA methyltransferase RsmG family.

The protein resides in the cytoplasm. It catalyses the reaction guanosine(527) in 16S rRNA + S-adenosyl-L-methionine = N(7)-methylguanosine(527) in 16S rRNA + S-adenosyl-L-homocysteine. Specifically methylates the N7 position of guanine in position 527 of 16S rRNA. The chain is Ribosomal RNA small subunit methyltransferase G from Klebsiella pneumoniae subsp. pneumoniae (strain ATCC 700721 / MGH 78578).